A 49-amino-acid chain; its full sequence is uncharacterized protein (49 aa).

The N-terminal stretch at 1–22 is a signal peptide; the sequence is MIQKPILLSSFLFLYIRALLHS.

This is an uncharacterized protein from Saccharomyces cerevisiae (strain ATCC 204508 / S288c) (Baker's yeast).